The sequence spans 345 residues: Phenylalanine--tRNA ligase alpha subunit (345 aa).

Glu-259 contacts Mg(2+).

The protein belongs to the class-II aminoacyl-tRNA synthetase family. Phe-tRNA synthetase alpha subunit type 1 subfamily. As to quaternary structure, tetramer of two alpha and two beta subunits. The cofactor is Mg(2+).

It localises to the cytoplasm. It carries out the reaction tRNA(Phe) + L-phenylalanine + ATP = L-phenylalanyl-tRNA(Phe) + AMP + diphosphate + H(+). The polypeptide is Phenylalanine--tRNA ligase alpha subunit (Lactococcus lactis subsp. cremoris (strain MG1363)).